Here is a 525-residue protein sequence, read N- to C-terminus: Probable protein kinase UbiB (525 aa).

The Protein kinase domain occupies 118-500 (EFERVPVASA…QRRTNRLLQA (383 aa)). ATP is bound by residues 124–132 (VASASIAQV) and lysine 150. The active-site Proton acceptor is aspartate 285. A helical transmembrane segment spans residues 501–521 (LLVFGLAVGAGAVIARVLIVL).

The protein belongs to the ABC1 family. UbiB subfamily.

It localises to the cell inner membrane. Its pathway is cofactor biosynthesis; ubiquinone biosynthesis [regulation]. Its function is as follows. Is probably a protein kinase regulator of UbiI activity which is involved in aerobic coenzyme Q (ubiquinone) biosynthesis. The polypeptide is Probable protein kinase UbiB (Burkholderia mallei (strain SAVP1)).